The primary structure comprises 184 residues: MTEYKLVVVGDGGVGKSALTIQLIQNHFVEEYDPTIEDSYRKQVVIDGETCLLDILDTAGQEEYSAMRDQYMRTGEGFLLVFAVNEAKSFENVANYREQIRRVKDSDDVPMVLVGNKCDLSSRSVDFRTVSETAKGYGIPNVDTSAKTRMGVDEAFYTLVREIRKHRERHDNNKPQKKKKCQIM.

10–17 (GDGGVGKS) lines the GTP pocket. Residues 32 to 40 (YDPTIEDSY) carry the Effector region motif. GTP contacts are provided by residues 57–61 (DTAGQ) and 116–119 (NKCD). Cysteine methyl ester is present on C181. C181 carries the S-farnesyl cysteine lipid modification. A propeptide spans 182–184 (QIM) (removed in mature form).

It belongs to the small GTPase superfamily. Ras family. In terms of assembly, interacts with soc-2. Interacts (in GTP-bound form) with plc-1 (via Ras-associating domain 1). In terms of tissue distribution, expressed in body wall muscles and in the nervous system including ganglion, nerve ring dorsal and ventral nerve cords, motor neurons and sensory tail neurons.

The protein localises to the cell membrane. It carries out the reaction GTP + H2O = GDP + phosphate + H(+). Functionally, GTP-binding protein with GTPase activity. The level of let-60 controls the switch between vulval and hypodermal cell fates during C.elegans vulval induction. May stimulate the guanine nucleotide exchange factor (GEF) activity of rap-1. May induce nuclear condensation. The chain is Ras protein let-60 from Caenorhabditis elegans.